We begin with the raw amino-acid sequence, 738 residues long: ATP-dependent RNA helicase rok1 (738 aa).

2 disordered regions span residues 1–112 (MDAF…DEEV) and 145–176 (VASEEPKKKKKKRKQQEEEESKVPLTKKEQKK). Residues 17 to 29 (ATPSSAQSSTRLP) show a composition bias toward polar residues. Over residues 92 to 104 (SKEEKQEQERSGE) the composition is skewed to basic and acidic residues. The Q motif signature appears at 190 to 218 (ELRSKYKISSRLAENIAEQGFTVPTEVQL). One can recognise a Helicase ATP-binding domain in the interval 231 to 447 (KAGESVEPDL…KSTIKERKEA (217 aa)). ATP is bound at residue 244–251 (APTGSGKT). Residues 316–356 (VVEREDEDDDGDDSSSEDGDESSESEHEERPIAKKSKGKAP) form a disordered region. Positions 319-338 (REDEDDDGDDSSSEDGDESS) are enriched in acidic residues. Residues 394–397 (DEAD) carry the DEAD box motif. A Helicase C-terminal domain is found at 487-655 (GLRQLLHPTA…SIQKWLLDAL (169 aa)). The tract at residues 663–738 (KKELKKHGVK…GNESWDGLEN (76 aa)) is disordered. Positions 697-706 (GFERRIENKK) are enriched in basic and acidic residues.

This sequence belongs to the DEAD box helicase family. DDX52/ROK1 subfamily. Interacts with the U3 snoRNA and is associated with the 90S and 40S pre-ribosomes.

The protein resides in the nucleus. It is found in the nucleolus. It carries out the reaction ATP + H2O = ADP + phosphate + H(+). In terms of biological role, ATP-dependent RNA helicase involved in 40S ribosomal subunit biogenesis. Required for the processing and cleavage of 35S pre-rRNA at sites A0, A1, and A2, leading to mature 18S rRNA. The sequence is that of ATP-dependent RNA helicase rok1 (rok1) from Aspergillus clavatus (strain ATCC 1007 / CBS 513.65 / DSM 816 / NCTC 3887 / NRRL 1 / QM 1276 / 107).